The primary structure comprises 121 residues: Ribosome-binding factor A (121 aa).

The protein belongs to the RbfA family. Monomer. Binds 30S ribosomal subunits, but not 50S ribosomal subunits or 70S ribosomes.

The protein localises to the cytoplasm. In terms of biological role, one of several proteins that assist in the late maturation steps of the functional core of the 30S ribosomal subunit. Associates with free 30S ribosomal subunits (but not with 30S subunits that are part of 70S ribosomes or polysomes). Required for efficient processing of 16S rRNA. May interact with the 5'-terminal helix region of 16S rRNA. This is Ribosome-binding factor A from Oenococcus oeni (strain ATCC BAA-331 / PSU-1).